The chain runs to 63 residues: Alpha-conotoxin-like Am1.6 (63 aa).

Positions 1-21 are cleaved as a signal peptide; the sequence is MGMRMMFTVFLLVVLATTVVS. The propeptide occupies 22–46; sequence FTSYRASDGRNAAAKASDLIALTVR. The interval 50–52 is ser-Xaa-Pro motif, crucial for potent interaction with nAChR; that stretch reads SRP.

This sequence belongs to the conotoxin A superfamily. Post-translationally, is not hydroxylated. In terms of processing, contains 2 disulfide bonds. In terms of tissue distribution, expressed by the venom duct.

Its subcellular location is the secreted. In terms of biological role, alpha-conotoxins act on postsynaptic membranes, they bind to the nicotinic acetylcholine receptors (nAChR) and thus inhibit them. The chain is Alpha-conotoxin-like Am1.6 from Conus amadis (Amadis cone).